We begin with the raw amino-acid sequence, 173 residues long: Alpha-crystallin A chain (173 aa).

Position 1 is an N-acetylmethionine (M1). The 113-residue stretch at 52–164 folds into the sHSP domain; sequence LFRSVLESGI…SDRPIPVARE (113 aa). The Zn(2+) site is built by H100, E102, H107, and H154. The interval 152–173 is disordered; the sequence is TIHSDRPIPVAREEKPTSAPSS. The span at 153–167 shows a compositional bias: basic and acidic residues; sequence IHSDRPIPVAREEKP.

This sequence belongs to the small heat shock protein (HSP20) family. As to quaternary structure, heteropolymer composed of three CRYAA and one CRYAB subunits. Inter-subunit bridging via zinc ions enhances stability, which is crucial as there is no protein turn over in the lens. Can also form homodimers and homotetramers (dimers of dimers) which serve as the building blocks of homooligomers. Within homooligomers, the zinc-binding motif is created from residues of 3 different molecules. His-100 and Glu-102 from one molecule are ligands of the zinc ion, and His-107 and His-154 residues from additional molecules complete the site with tetrahedral coordination geometry.

Its subcellular location is the cytoplasm. It localises to the nucleus. In terms of biological role, contributes to the transparency and refractive index of the lens. May act as a chaperone, preventing aggregation of various proteins under a wide range of stress conditions. This is Alpha-crystallin A chain (CRYAA) from Alligator mississippiensis (American alligator).